The chain runs to 234 residues: MQFNKPLRQGVLQKRYKRFLADIDFGDNETTTTHCPNTGAMTGCAEPGFTAWCSVSDNPKRKYSLTWELAQNNNGEMIVVNTQHANRMAGELLQTNLVPELSQWQELKPEQRYGKEKSRIDWWGVDQHNRECFIEVKSVTLADASQGYFPDAVSQRAHKHLNELMQVVADGHRAVQLYMVMHDGIERVSPAAHIDSQYAELCRKAASVGVEFYAVKCRASAKEIKLERPVPVSL.

The protein belongs to the SfsA family.

The chain is Sugar fermentation stimulation protein homolog from Idiomarina loihiensis (strain ATCC BAA-735 / DSM 15497 / L2-TR).